The chain runs to 347 residues: MSDRLTLLRPDDWHIHLRDGAVLPHTVADVARTFGRAIIMPNLVPPVRNAQQADAYRQRILAARPATSRFEPLMVLYLTDQTTPDDIRTAKASGFVYAAKLYPAGATTNSDSGVTSIDKIFPALEAMADVGMLLLVHGEVTRGEIDVFDREKVFIDEHLRRVVERFPSLKVVFEHITTGEAVQFVNEASANVAATITAHHLLYNRNHMLVGGIRPHFYCLPILKRNTHQTALLDAATSGSGKFFLGTDSAPHAQHAKENACGCAGCYTAYAAIELYAEAFEQRNALDKLEGFASLHGPAFYGLPANQDTITLVRDEWTAPASLPFGELTVIPLRAGETLRWRLEEHA.

The Zn(2+) site is built by histidine 14 and histidine 16. Substrate contacts are provided by residues 16-18 (HLR) and asparagine 42. Positions 100, 137, and 175 each coordinate Zn(2+). Residue lysine 100 is modified to N6-carboxylysine. Substrate is bound at residue histidine 137. Residue leucine 220 coordinates substrate. Residue aspartate 248 participates in Zn(2+) binding. Aspartate 248 is an active-site residue. Substrate-binding residues include histidine 252 and alanine 264.

This sequence belongs to the metallo-dependent hydrolases superfamily. DHOase family. Class II DHOase subfamily. In terms of assembly, homodimer. The cofactor is Zn(2+).

It carries out the reaction (S)-dihydroorotate + H2O = N-carbamoyl-L-aspartate + H(+). The protein operates within pyrimidine metabolism; UMP biosynthesis via de novo pathway; (S)-dihydroorotate from bicarbonate: step 3/3. Its function is as follows. Catalyzes the reversible cyclization of carbamoyl aspartate to dihydroorotate. This Pseudomonas syringae pv. syringae (strain B728a) protein is Dihydroorotase.